The chain runs to 90 residues: Sec-independent protein translocase protein TatAo (90 aa).

A helical transmembrane segment spans residues 8–28; sequence FPGLPGGPELLIVLLIVVLLF. The disordered stretch occupies residues 39-90; that stretch reads SSGQAMGEFRRGREEIEEELKKGAEGGDDEGENGDEAEADDADATETEAESR. Positions 46-63 are enriched in basic and acidic residues; sequence EFRRGREEIEEELKKGAE. A compositionally biased stretch (acidic residues) spans 64–90; it reads GGDDEGENGDEAEADDADATETEAESR.

The protein belongs to the TatA/E family. In terms of assembly, forms a complex with TatC. Cytoplasmic and membrane-bound TatA form high-molecular-weight complexes.

It localises to the cell membrane. The protein localises to the cytoplasm. Functionally, part of the twin-arginine translocation (Tat) system that transports large folded proteins containing a characteristic twin-arginine motif in their signal peptide across membranes. TatA could form the protein-conducting channel of the Tat system. The protein is Sec-independent protein translocase protein TatAo of Haloferax volcanii (strain ATCC 29605 / DSM 3757 / JCM 8879 / NBRC 14742 / NCIMB 2012 / VKM B-1768 / DS2) (Halobacterium volcanii).